The primary structure comprises 472 residues: 3-isopropylmalate dehydratase large subunit (472 aa).

Residues C352, C413, and C416 each contribute to the [4Fe-4S] cluster site.

The protein belongs to the aconitase/IPM isomerase family. LeuC type 1 subfamily. Heterodimer of LeuC and LeuD. [4Fe-4S] cluster is required as a cofactor.

The enzyme catalyses (2R,3S)-3-isopropylmalate = (2S)-2-isopropylmalate. The protein operates within amino-acid biosynthesis; L-leucine biosynthesis; L-leucine from 3-methyl-2-oxobutanoate: step 2/4. Catalyzes the isomerization between 2-isopropylmalate and 3-isopropylmalate, via the formation of 2-isopropylmaleate. This is 3-isopropylmalate dehydratase large subunit from Laribacter hongkongensis (strain HLHK9).